The following is a 227-amino-acid chain: MKFLANLKCNHTRASFREYAKILDENLSANDDVSVFAPASAFDEKKHMFRLGAQNFYPCESGAFTGEIGKAMLDEFEIKDVLIGHSERREILNESEEFLRSKFDFAAKNGWNVIYCIGENLSTNESGATKEFLSRQLENIDLGYKNLVIAYEPIWAIGTGRSASIEQIDEVLSFLKTKANVPLLYGGSVNAANIADIAGIKSCDGVLVGTASWDANNFLGLIGAASR.

Substrate is bound at residue 6-8; it reads NLK. Histidine 85 functions as the Electrophile in the catalytic mechanism. Glutamate 152 functions as the Proton acceptor in the catalytic mechanism. Residues glycine 158 and serine 188 each contribute to the substrate site.

This sequence belongs to the triosephosphate isomerase family. As to quaternary structure, homodimer.

The protein resides in the cytoplasm. The enzyme catalyses D-glyceraldehyde 3-phosphate = dihydroxyacetone phosphate. It functions in the pathway carbohydrate biosynthesis; gluconeogenesis. The protein operates within carbohydrate degradation; glycolysis; D-glyceraldehyde 3-phosphate from glycerone phosphate: step 1/1. In terms of biological role, involved in the gluconeogenesis. Catalyzes stereospecifically the conversion of dihydroxyacetone phosphate (DHAP) to D-glyceraldehyde-3-phosphate (G3P). This chain is Triosephosphate isomerase, found in Campylobacter concisus (strain 13826).